The chain runs to 234 residues: Putative gustatory receptor clone PTE38 (234 aa).

Residues 1-11 (MYLFFSNLSFN) traverse the membrane as a helical segment. Residues 12 to 42 (DICIITTTIPKMLMNVQSHDQSITYLGCLSQ) lie on the Extracellular side of the membrane. Cysteine 39 and cysteine 121 form a disulfide bridge. A helical transmembrane segment spans residues 43–62 (VYLIVNFGSIESCLLAVMAY). The Cytoplasmic segment spans residues 63 to 84 (DRYVAICHPLKYTVIMNHYFCV). The chain crosses the membrane as a helical span at residues 85–105 (MLLLFACSLALHMCLFHILMV). Topologically, residues 106–138 (LILTFCTKTEIPHFFCELAHIIKLTCSDNFINY) are extracellular. A helical transmembrane segment spans residues 139–160 (LLIYTVSVLFFGVHIVGIILSY). The Cytoplasmic portion of the chain corresponds to 161 to 182 (IYTVSSVLRMSLLGGMYKAFST). The helical transmembrane segment at 183–202 (CGSHLSVVSLFYGTGFGVHI) threads the bilayer. The Extracellular segment spans residues 203 to 212 (SSPLTDSPRK). The chain crosses the membrane as a helical span at residues 213–234 (TVVASVMYTVVTQMHGPFIYSL).

Belongs to the G-protein coupled receptor 1 family. Tongue specific.

It localises to the cell membrane. Functionally, possible taste receptor. The chain is Putative gustatory receptor clone PTE38 from Rattus norvegicus (Rat).